Reading from the N-terminus, the 155-residue chain is Aspartate 1-decarboxylase (155 aa).

The active-site Schiff-base intermediate with substrate; via pyruvic acid is the S24. S24 is modified (pyruvic acid (Ser)). T56 provides a ligand contact to substrate. Y57 (proton donor) is an active-site residue. Residue 72–74 (GAA) participates in substrate binding.

The protein belongs to the PanD family. Heterooctamer of four alpha and four beta subunits. Pyruvate serves as cofactor. In terms of processing, is synthesized initially as an inactive proenzyme, which is activated by self-cleavage at a specific serine bond to produce a beta-subunit with a hydroxyl group at its C-terminus and an alpha-subunit with a pyruvoyl group at its N-terminus.

It localises to the cytoplasm. The enzyme catalyses L-aspartate + H(+) = beta-alanine + CO2. The protein operates within cofactor biosynthesis; (R)-pantothenate biosynthesis; beta-alanine from L-aspartate: step 1/1. Its function is as follows. Catalyzes the pyruvoyl-dependent decarboxylation of aspartate to produce beta-alanine. The protein is Aspartate 1-decarboxylase of Methylocella silvestris (strain DSM 15510 / CIP 108128 / LMG 27833 / NCIMB 13906 / BL2).